Here is a 266-residue protein sequence, read N- to C-terminus: Glucosamine-6-phosphate deaminase (266 aa).

Residue Asp-72 is the Proton acceptor; for enolization step of the active site. The active-site For ring-opening step is the Asp-141. His-143 (proton acceptor; for ring-opening step) is an active-site residue. The active-site For ring-opening step is the Glu-148.

The protein belongs to the glucosamine/galactosamine-6-phosphate isomerase family. NagB subfamily. As to quaternary structure, homohexamer.

It carries out the reaction alpha-D-glucosamine 6-phosphate + H2O = beta-D-fructose 6-phosphate + NH4(+). The protein operates within amino-sugar metabolism; N-acetylneuraminate degradation; D-fructose 6-phosphate from N-acetylneuraminate: step 5/5. Allosterically activated by N-acetylglucosamine 6-phosphate (GlcNAc6P). In terms of biological role, catalyzes the reversible isomerization-deamination of glucosamine 6-phosphate (GlcN6P) to form fructose 6-phosphate (Fru6P) and ammonium ion. The polypeptide is Glucosamine-6-phosphate deaminase (Yersinia pestis bv. Antiqua (strain Antiqua)).